The chain runs to 227 residues: Ribonuclease 3 (227 aa).

The 123-residue stretch at 4 to 126 folds into the RNase III domain; the sequence is LDRLERKIGY…IIGAMSLDQG (123 aa). Residue glutamate 39 participates in Mg(2+) binding. Aspartate 43 is a catalytic residue. Positions 112 and 115 each coordinate Mg(2+). Glutamate 115 is an active-site residue. Residues 153-226 form the DRBM domain; it reads DAKTRLQEYL…AEQILKELDI (74 aa).

This sequence belongs to the ribonuclease III family. Homodimer. The cofactor is Mg(2+).

It localises to the cytoplasm. The catalysed reaction is Endonucleolytic cleavage to 5'-phosphomonoester.. In terms of biological role, digests double-stranded RNA. Involved in the processing of primary rRNA transcript to yield the immediate precursors to the large and small rRNAs (23S and 16S). Processes some mRNAs, and tRNAs when they are encoded in the rRNA operon. Processes pre-crRNA and tracrRNA of type II CRISPR loci if present in the organism. This Haemophilus influenzae (strain ATCC 51907 / DSM 11121 / KW20 / Rd) protein is Ribonuclease 3.